The sequence spans 98 residues: NADH-ubiquinone oxidoreductase chain 4L (98 aa).

3 helical membrane passes run 2–22 (PSISINITLAFTTALLGMLMF), 29–49 (SLLCLEGMMLSMFILSTLIIL), and 61–81 (ILLLVFAACEAAIGLALLVMI).

It belongs to the complex I subunit 4L family. In terms of assembly, core subunit of respiratory chain NADH dehydrogenase (Complex I) which is composed of 45 different subunits.

It localises to the mitochondrion inner membrane. The catalysed reaction is a ubiquinone + NADH + 5 H(+)(in) = a ubiquinol + NAD(+) + 4 H(+)(out). Core subunit of the mitochondrial membrane respiratory chain NADH dehydrogenase (Complex I) which catalyzes electron transfer from NADH through the respiratory chain, using ubiquinone as an electron acceptor. Part of the enzyme membrane arm which is embedded in the lipid bilayer and involved in proton translocation. The protein is NADH-ubiquinone oxidoreductase chain 4L (MT-ND4L) of Mirza coquereli (Coquerel's giant mouse lemur).